Here is a 603-residue protein sequence, read N- to C-terminus: Pyruvate oxidase (603 aa).

Positions 1 to 191 (MVMKQTKQTN…WYASANSYQT (191 aa)) are core. An FAD-binding region spans residues 192-342 (PLLPEPDVQA…ILAQVSERES (151 aa)). The tract at residues 343 to 603 (TPWWQANLAN…LQHQIGQGGF (261 aa)) is thiamine pyrophosphate binding. 3 residues coordinate Mg(2+): Asp447, Asn474, and Gln476.

The protein belongs to the TPP enzyme family. Homotetramer. The cofactor is FAD. Mg(2+) is required as a cofactor. Requires thiamine diphosphate as cofactor.

The enzyme catalyses pyruvate + phosphate + O2 + H(+) = acetyl phosphate + H2O2 + CO2. Functionally, important for the aerobic growth. Decarboxylates pyruvate in four steps. The energy released is partially stored in acetyl phosphate. The sequence is that of Pyruvate oxidase (pox5) from Lactiplantibacillus plantarum (strain ATCC BAA-793 / NCIMB 8826 / WCFS1) (Lactobacillus plantarum).